The following is a 1166-amino-acid chain: MINVMYKNSCPNCGGDISADRLLNGLPCETCLPYINGIDGIDHISKVKALYNILLDNDKIKNYWNLYYNITTFETVFKYFKDKTGYEPWSLQKLWLRRLVSNQSFTMSAPTGLGKTTTLMTYSVFIGQDVVYIVPTKSLMEQVCKRLEKLGAQVSCGKVDQRKVSVITISYLNKNADSITSYKPNFVAIDDADAVIKSGKTTDRLVSLLGIPNDVYESAIQLIRLRNKYYFSNEFTEEIKEKIRELELKIAEFKDKISQLVIASATIRPKGIKQKALRLLTGFEPSSIQLYARNIIDTYTDNLDLSIIKELGSGGLILVSKEYGRSRLNEIKKYVEDLGFNAKLAISGRKFLDDFSQGKVDILVGSASYYGVAVRGIDEPKRLKYVIYYGVPKIKAKLFDALSNPFTLLRVGKMIGVNFSELQNKILVLSPSEAQLLKFSIIKGETINYQKLEQLRQELLYYISLVKDKLKEIGEETLISDNFVIAKQNTNYYIIYPDMITYLQGSGRASRLYNGGLTLGFSIILVDDKHIFEILKKKMQKLFPNTNFTSLSNINLSEIKTKLEESRKEEGNRVHFNISTGLLIVESPTKAKTIAKMFSRPSVRVINKVPVYETIIVDGNQIYVLDVVASKGHIVDLTLEDIGYYGIKIEYSGIIKPYYDLIKKCLDCNKTFSIASDKCPYCGSTNVQTAQTTINLLRELALSVDKVFIASDPDTEGEKIAYDLASFLSPYNSNIYRITYHEITKKAILEALRNPMKINTNLVMSQIVRRIEDRWIGFTLSNLLKTKFNGHNHGAGRVQTPVLGWIVDKTIKYKSAMGYVVYIDIAGYPIKMHFSERKKMEEYINNLQVVKIEKIFEEKILLSPLPPFTTDTLLIEANMKYKLPANLVMKIAQDLFEAGLITYHRTDSTHISSVGIEIAKEYLQKQGLIKDFVPRSWESSEEGAHEAIRPTRAIDVNELIQEIEENPYKYSIRFSKLHFLIYDLIFRRFMASQMSHAVGTKSRYLIKLNKNDNINAELLSNAEGGFIKVYPVKVYNLPLGEVKPKVNTGKGSSEQLLSYSDVISLMKSKGIGRPSTYAKTIENLVRHGYIVSSKRKSYLIATNRGISAYQFLSSKFYDLVSEGTTAKLMSKLDDIALSKLSASTVLLEIFSEISTLVNPLKSEQNV.

The RG N-terminal-type zinc-finger motif lies at 1–40 (MINVMYKNSCPNCGGDISADRLLNGLPCETCLPYINGIDG). Positions 10, 13, 28, and 31 each coordinate Zn(2+). ATP contacts are provided by residues Gln-92 and 109-116 (APTGLGKT). The Helicase ATP-binding domain maps to 96–285 (LRRLVSNQSF…ALRLLTGFEP (190 aa)). Residues 190–193 (DDAD) carry the DEAD box motif. Positions 576 to 1166 (FNISTGLLIV…VNPLKSEQNV (591 aa)) are topoisomerase I. Residues 580 to 743 (TGLLIVESPT…NIYRITYHEI (164 aa)) form the Toprim domain. Residue Glu-586 coordinates Mg(2+). The RG C-terminal-type zinc-finger motif lies at 662-689 (IKKCLDCNKTFSIASDKCPYCGSTNVQT). Positions 665, 668, 679, and 682 each coordinate Zn(2+). Asp-712 contributes to the Mg(2+) binding site. Residues 759–1157 (NTNLVMSQIV…EIFSEISTLV (399 aa)) form the Topo IA-type catalytic domain. The active-site O-(5'-phospho-DNA)-tyrosine intermediate is Tyr-903.

This sequence in the N-terminal section; belongs to the DEAD box helicase family. DDVD subfamily. The protein in the C-terminal section; belongs to the type IA topoisomerase family. In terms of assembly, monomer. It depends on Zn(2+) as a cofactor. Requires Mg(2+) as cofactor.

The protein resides in the cytoplasm. It catalyses the reaction ATP + H2O = ADP + phosphate + H(+). Inhibited by UV light-induced lesions; substrate is completely cleaved but a nicked form accumulates, suggesting the reaction is blocked between the cleavage and ligation steps. Inhibited by actinomycin D; substrate DNA remains negatively supercoiled in this case. Activity is stimulated by SSB from S.solfataricus strain P2. Positive supercoiling is inhibited by Sul7d (also called Sso7d) from S.solfataricus strain MT4; SSB from S.solfataricus strain P2 relieves this inhibition. Functionally, modifies the topological state of DNA by introducing positive supercoils in an ATP-dependent process. Increases the linking number in steps of +1. In vitro requires high concentrations to supercoil negatively supercoiled DNA, relaxes plasmid DNA first; DNA single-strand binding protein (SSB) from S.solfataricus strain P2 stimulates positive supercoiling. SSB stimulates DNA-binding by reverse gyrase, and thus all subsequent steps. Binds to single-stranded DNA, transiently cleaves and then rejoins the ends, introducing a positive supercoil in the process. The scissile phosphodiester is attacked by the catalytic tyrosine of the enzyme, resulting in the formation of a DNA-(5'-phosphotyrosyl)-enzyme intermediate. May be involved in DNA damage response. Probably involved in rewinding DNA strands in regions of the chromosome that have opened up to allow replication, transcription, DNA repair and/or for DNA protection. The chain is Reverse gyrase from Saccharolobus shibatae (strain ATCC 51178 / DSM 5389 / JCM 8931 / NBRC 15437 / B12) (Sulfolobus shibatae).